We begin with the raw amino-acid sequence, 924 residues long: Hexokinase-3 (924 aa).

The disordered stretch occupies residues 1-27 (MAAIEPSGLHPGERDSSCPQEGIPRPS). Hexokinase domains are found at residues 27–471 (SGSL…MVTA) and 477–913 (ATHR…LVTR). Residues 84–220 (HGTEQGDFLV…TYNIDVVAMV (137 aa)) form a hexokinase small subdomain 1 region. 95-102 (ELGATGAS) contributes to the ATP binding site. Position 95-104 (95-104 (ELGATGASLR)) interacts with D-glucose 6-phosphate. D-glucose contacts are provided by residues Ser-168, 185 to 186 (TK), and 221 to 222 (ND). The hexokinase large subdomain 1 stretch occupies residues 221 to 460 (NDTVGTMMGC…CDVSFIPSVD (240 aa)). 2 residues coordinate D-glucose 6-phosphate: Asp-222 and Thr-245. D-glucose contacts are provided by residues Asn-248, Glu-273, and 304-307 (QRFE). Residue 426–428 (GGR) participates in D-glucose 6-phosphate binding. ATP is bound by residues 438–439 (CI) and 542–547 (DLGGTN). The tract at residues 531–662 (DGSERGDFLA…AVELNVVAIV (132 aa)) is hexokinase small subdomain 2. 542 to 546 (DLGGT) serves as a coordination point for D-glucose 6-phosphate. D-glucose is bound by residues 610–611 (SF), 627–628 (TK), and 663–664 (ND). A hexokinase large subdomain 2 region spans residues 663–902 (NDTVGTMMSC…CTVTFLQSED (240 aa)). Residues Asp-664 and Thr-687 each contribute to the D-glucose 6-phosphate site. Residue Thr-687 participates in ATP binding. D-glucose-binding positions include 689–690 (TN), Glu-715, and Glu-749. ATP contacts are provided by residues 754–755 (GM), 791–795 (TKFLS), and 870–874 (TLYKL). D-glucose 6-phosphate contacts are provided by residues 868-870 (DGT) and Ser-904.

It belongs to the hexokinase family.

The enzyme catalyses a D-hexose + ATP = a D-hexose 6-phosphate + ADP + H(+). It catalyses the reaction D-fructose + ATP = D-fructose 6-phosphate + ADP + H(+). It carries out the reaction D-glucose + ATP = D-glucose 6-phosphate + ADP + H(+). The protein operates within carbohydrate metabolism; hexose metabolism. Its pathway is carbohydrate degradation; glycolysis; D-glyceraldehyde 3-phosphate and glycerone phosphate from D-glucose: step 1/4. Hexokinase is an allosteric enzyme inhibited by its product D-glucose 6-phosphate. Catalyzes the phosphorylation of hexose, such as D-glucose and D-fructose, to hexose 6-phosphate (D-glucose 6-phosphate and D-fructose 6-phosphate, respectively). Mediates the initial step of glycolysis by catalyzing phosphorylation of D-glucose to D-glucose 6-phosphate. The protein is Hexokinase-3 of Rattus norvegicus (Rat).